Here is an 898-residue protein sequence, read N- to C-terminus: Phosphoenolpyruvate carboxylase (898 aa).

Catalysis depends on residues H134 and K564.

The protein belongs to the PEPCase type 1 family. It depends on Mg(2+) as a cofactor.

It carries out the reaction oxaloacetate + phosphate = phosphoenolpyruvate + hydrogencarbonate. In terms of biological role, forms oxaloacetate, a four-carbon dicarboxylic acid source for the tricarboxylic acid cycle. The protein is Phosphoenolpyruvate carboxylase of Chromobacterium violaceum (strain ATCC 12472 / DSM 30191 / JCM 1249 / CCUG 213 / NBRC 12614 / NCIMB 9131 / NCTC 9757 / MK).